The sequence spans 162 residues: RNA pyrophosphohydrolase (162 aa).

A Nudix hydrolase domain is found at 7–149 (KYRPCVGIML…KKEVYKTVIE (143 aa)). The Nudix box motif lies at 40-61 (GGVDDGEELEQAALRELLEEVG).

It belongs to the Nudix hydrolase family. RppH subfamily. A divalent metal cation is required as a cofactor.

Accelerates the degradation of transcripts by removing pyrophosphate from the 5'-end of triphosphorylated RNA, leading to a more labile monophosphorylated state that can stimulate subsequent ribonuclease cleavage. The chain is RNA pyrophosphohydrolase from Wolbachia pipientis wMel.